Reading from the N-terminus, the 1067-residue chain is Receptor-type guanylate cyclase gcy-10 (1067 aa).

Positions 1–20 (MLKSLLIIVIVFLHRELCDG) are cleaved as a signal peptide. At 21-438 (IQLILFDNWP…CVAKSSCVNY (418 aa)) the chain is on the extracellular side. The N-linked (GlcNAc...) asparagine glycan is linked to Asn-411. The helical transmembrane segment at 439–459 (IPHIIAAVVIVTIIVIAIVII) threads the bilayer. The Cytoplasmic portion of the chain corresponds to 460 to 1067 (VKQRRHKLNI…RGSIVPLQKA (608 aa)). The Protein kinase domain maps to 509–791 (ALTSRRRVFG…ESISTVYPLS (283 aa)). ATP is bound by residues 515–523 (RVFGSYALV) and Lys-534. The Guanylate cyclase domain occupies 859–989 (TVMFVQICDF…DTVNFASRMQ (131 aa)).

Belongs to the adenylyl cyclase class-4/guanylyl cyclase family. In terms of tissue distribution, expressed predominantly in AWC but also in AWB, ASI, ASJ and ASK sensory neurons and in I1 interneuron.

Its subcellular location is the cell membrane. It localises to the cell projection. The protein resides in the cilium. It carries out the reaction GTP = 3',5'-cyclic GMP + diphosphate. Functionally, guanylate cyclase involved in the production of the second messenger cGMP. Regulates chemotaxis responses toward volatile odorants in AWC sensory neurons and their avoidance in AWB sensory neurons. May be involved in sensitivity to quinine by regulating egl-4 activity through the production of cGMP. Involved in phototransduction in ASJ neurons downstream of G protein coupled-photoreceptor lite-1. Required to maintain the expression of putative olfactory receptor str-2 in AWC neurons in adults. In AWB and AWC sensory neurons, mediates the recognition of food oders which subsequently allows for the detection of preferred food sources. Involved in AWB sensory neuron development and extension during postembryonic development, potentially via mediating localization of tub-1 and PI(4,5)P2 to membrane cilia. This chain is Receptor-type guanylate cyclase gcy-10, found in Caenorhabditis elegans.